We begin with the raw amino-acid sequence, 142 residues long: Glia maturation factor gamma (142 aa).

S2 is subject to N-acetylserine. Residues 4 to 139 (SLVVCEVDPE…TETWLKEKLA (136 aa)) enclose the ADF-H domain.

The protein belongs to the actin-binding proteins ADF family. GMF subfamily.

In Mus musculus (Mouse), this protein is Glia maturation factor gamma (Gmfg).